The following is an 875-amino-acid chain: Alanine--tRNA ligase (875 aa).

The Zn(2+) site is built by His-564, His-568, Cys-666, and His-670.

It belongs to the class-II aminoacyl-tRNA synthetase family. As to quaternary structure, homotetramer. Zn(2+) is required as a cofactor.

It is found in the cytoplasm. It catalyses the reaction tRNA(Ala) + L-alanine + ATP = L-alanyl-tRNA(Ala) + AMP + diphosphate. Catalyzes the attachment of alanine to tRNA(Ala) in a two-step reaction: alanine is first activated by ATP to form Ala-AMP and then transferred to the acceptor end of tRNA(Ala). Also edits incorrectly charged Ser-tRNA(Ala) and Gly-tRNA(Ala) via its editing domain. In Enterobacter sp. (strain 638), this protein is Alanine--tRNA ligase.